Consider the following 361-residue polypeptide: 4-hydroxytryptamine kinase (361 aa).

Residues asparagine 37, lysine 57, and 118–120 (QDV) contribute to the ATP site. Aspartate 224 is an active-site residue. 248-250 (DWE) provides a ligand contact to ATP.

Belongs to the methylthioribose kinase family. Monomer. It depends on Mg(2+) as a cofactor.

It catalyses the reaction 4-hydroxytryptamine + ATP = norbaeocystin + ADP + H(+). The catalysed reaction is psilocin + ATP = psilocybin + ADP + H(+). It carries out the reaction 4-hydroxy-N,N,N-trimethyltryptamine + ATP = aeruginascin + ADP + H(+). It participates in secondary metabolite biosynthesis. Functionally, 4-hydroxytryptamine kinase; part of the gene cluster that mediates the biosynthesis of psilocybin, a psychotropic tryptamine-derived natural product. The first step in the pathway is the decarboxylation of L-tryptophan to tryptamine by the decarboxylase psiD. PsiD does not decarboxylate phenylalanine, tyrosine, or 5-hydroxy- L -tryptophan (5-HTP). 4-hydroxy-L-tryptophan is accepted as substrate by psiD as well. The cytochrome P450 monooxygenase psiH then converts tryptamine to 4-hydroxytryptamine. The kinase psiK catalyzes the 4-O-phosphorylation step by converting 4-hydroxytryptamine into norbaeocystin. The methyltransferase psiM then catalyzes iterative methyl transfer to the amino group of norbaeocystin to yield psilocybin via a monomethylated intermediate, baeocystin. 4-hydroxy-6-methyl-l-tryptophancan also be converted the decarboxylase PsiD, kinase PsiK, and methyltransferase PsiM into respectively 6-methyl-norbaeocystin, 6-methylbaeocystin, and 6-methylpsilocybin. PsiK kinase can also turn psilocin into psilocybin. This activity may represent a protective mechanism to rephosphorylate the unstable psilocin to the stable psilocybin in case of intracellular ester cleavage. Moreover, psiK is able to O-phosphorylate the quaternary amine 4-hydroxy-N,N,N-trimethyltryptamine (4-OH-TMT) to yield aeruginascin, another bioactive compound found in Psilocybe species. The sequence is that of 4-hydroxytryptamine kinase from Psilocybe cyanescens.